Reading from the N-terminus, the 197-residue chain is Phospholipid hydroperoxide glutathione peroxidase (197 aa).

Position 40 is a phosphoserine (Ser-40). Sec-73 is a catalytic residue. Position 73 (Sec-73) is a non-standard amino acid, selenocysteine.

It belongs to the glutathione peroxidase family. In terms of assembly, monomer. Has a tendency to form higher mass oligomers. Interacts with FUNDC1; this interaction promotes GPX4 recruitment into mitochondria through TOM/TIM complex where it is degraded by mitophagy. In terms of tissue distribution, expressed very intensively in the testis and weakly in lung, heart, and cerebellum.

Its subcellular location is the mitochondrion. The protein localises to the cytoplasm. The enzyme catalyses a hydroperoxy polyunsaturated fatty acid + 2 glutathione = a hydroxy polyunsaturated fatty acid + glutathione disulfide + H2O. The catalysed reaction is 2 glutathione + H2O2 = glutathione disulfide + 2 H2O. It carries out the reaction tert-butyl hydroperoxide + 2 glutathione = tert-butanol + glutathione disulfide + H2O. It catalyses the reaction cumene hydroperoxide + 2 glutathione = 2-phenylpropan-2-ol + glutathione disulfide + H2O. The enzyme catalyses (9S)-hydroperoxy-(10E,12Z)-octadecadienoate + 2 glutathione = (9S)-hydroxy-(10E,12Z)-octadecadienoate + glutathione disulfide + H2O. The catalysed reaction is (13S)-hydroperoxy-(9Z,11E)-octadecadienoate + 2 glutathione = (13S)-hydroxy-(9Z,11E)-octadecadienoate + glutathione disulfide + H2O. It carries out the reaction (5S)-hydroperoxy-(6E,8Z,11Z,14Z)-eicosatetraenoate + 2 glutathione = (5S)-hydroxy-(6E,8Z,11Z,14Z)-eicosatetraenoate + glutathione disulfide + H2O. It catalyses the reaction (12R)-hydroperoxy-(5Z,8Z,10E,14Z)-eicosatetraenoate + 2 glutathione = (12R)-hydroxy-(5Z,8Z,10E,14Z)-eicosatetraenoate + glutathione disulfide + H2O. The enzyme catalyses (12S)-hydroperoxy-(5Z,8Z,10E,14Z)-eicosatetraenoate + 2 glutathione = (12S)-hydroxy-(5Z,8Z,10E,14Z)-eicosatetraenoate + glutathione disulfide + H2O. The catalysed reaction is (15S)-hydroperoxy-(5Z,8Z,11Z,13E)-eicosatetraenoate + 2 glutathione = (15S)-hydroxy-(5Z,8Z,11Z,13E)-eicosatetraenoate + glutathione disulfide + H2O. It carries out the reaction (5S)-hydroperoxy-(6E,8Z,11Z,14Z,17Z)-eicosapentaenoate + 2 glutathione = (5S)-hydroxy-(6E,8Z,11Z,14Z,17Z)-eicosapentaenoate + glutathione disulfide + H2O. It catalyses the reaction (12S)-hydroperoxy-(5Z,8Z,10E,14Z,17Z)-eicosapentaenoate + 2 glutathione = (12S)-hydroxy-(5Z,8Z,10E,14Z,17Z)-eicosapentaenoate + glutathione disulfide + H2O. The enzyme catalyses (15S)-hydroperoxy-(5Z,8Z,11Z,13E,17Z)-eicosapentaenoate + 2 glutathione = (15S)-hydroxy-(5Z,8Z,11Z,13E,17Z)-eicosapentaenoate + glutathione disulfide + H2O. The catalysed reaction is (15S)-hydroperoxy-(11Z,13E)-eicosadienoate + 2 glutathione = (15S)-hydroxy-(11Z,13E)-eicosadienoate + glutathione disulfide + H2O. It carries out the reaction (17S)-hydroperoxy-(4Z,7Z,10Z,13Z,15E,19Z)-docosahexaenoate + 2 glutathione = (17S)-hydroxy-(4Z,7Z,10Z,13Z,15E,19Z)-docosahexaenoate + glutathione disulfide + H2O. It catalyses the reaction a hydroperoxy-1,2-diacyl-glycero-3-phosphocholine + 2 glutathione = a hydroxy-1,2-diacyl-glycero-3-phosphocholine + glutathione disulfide + H2O. Functionally, essential antioxidant peroxidase that directly reduces phospholipid hydroperoxide even if they are incorporated in membranes and lipoproteins. Can also reduce fatty acid hydroperoxide, cholesterol hydroperoxide and thymine hydroperoxide. Plays a key role in protecting cells from oxidative damage by preventing membrane lipid peroxidation. Required to prevent cells from ferroptosis, a non-apoptotic cell death resulting from an iron-dependent accumulation of lipid reactive oxygen species. The presence of selenocysteine (Sec) versus Cys at the active site is essential for life: it provides resistance to overoxidation and prevents cells against ferroptosis. The presence of Sec at the active site is also essential for the survival of a specific type of parvalbumin-positive interneurons, thereby preventing against fatal epileptic seizures. May be required to protect cells from the toxicity of ingested lipid hydroperoxides. Required for normal sperm development and male fertility. Essential for maturation and survival of photoreceptor cells. Plays a role in a primary T-cell response to viral and parasitic infection by protecting T-cells from ferroptosis and by supporting T-cell expansion. Plays a role of glutathione peroxidase in platelets in the arachidonic acid metabolism. Reduces hydroperoxy ester lipids formed by a 15-lipoxygenase that may play a role as down-regulator of the cellular 15-lipoxygenase pathway. Can also reduce small soluble hydroperoxides such as H2O2, cumene hydroperoxide and tert-butyl hydroperoxide. The polypeptide is Phospholipid hydroperoxide glutathione peroxidase (Macaca fuscata fuscata (Japanese macaque)).